The following is a 1507-amino-acid chain: ABC multidrug transporter SNQ2 (1507 aa).

Positions 1 to 73 (MSSSSEISVA…RSSTAELSPE (73 aa)) are disordered. Positions 41–55 (RSHEDADGDDAHSDN) are enriched in basic and acidic residues. N-linked (GlcNAc...) asparagine glycans are attached at residues Asn55 and Asn336. The ABC transporter 1 domain occupies 157–412 (CLPYTIYKAI…FYRMGYECPP (256 aa)). 3 consecutive transmembrane segments (helical) span residues 522–542 (AYTV…GSLY), 556–576 (GGVL…NLSF), and 605–625 (FPFR…LSGL). N-linked (GlcNAc...) asparagine glycosylation is present at Asn626. The helical transmembrane segment at 635-655 (VYLFLTMCSESINALFELIAA) threads the bilayer. Asn659 carries an N-linked (GlcNAc...) asparagine glycan. 2 consecutive transmembrane segments (helical) span residues 665–685 (SISG…IQLP) and 773–793 (FGIM…ITEI). Residues 857–1099 (FIWRNVCYTI…LLSYFERNGA (243 aa)) form the ABC transporter 2 domain. Asn878 carries an N-linked (GlcNAc...) asparagine glycan. Residue 893–900 (GESGAGKT) coordinates ATP. A run of 3 helical transmembrane segments spans residues 1193–1213 (YIMS…FTFY), 1220–1240 (TGLQ…APAM), and 1270–1290 (LITQ…IFFV). Residue Asn1311 is glycosylated (N-linked (GlcNAc...) asparagine). The next 2 membrane-spanning stretches (helical) occupy residues 1314–1334 (IMFQ…APNL) and 1339–1359 (VILG…QPVS). A glycan (N-linked (GlcNAc...) asparagine) is linked at Asn1428. A helical membrane pass occupies residues 1459 to 1479 (FGLYWAYIGFNICAMVAIYYI).

Belongs to the ABC transporter superfamily. ABCG family. PDR (TC 3.A.1.205) subfamily.

The protein resides in the cell membrane. Functionally, ABC multidrug transporter involved in the response to azoles such as fluconazole, itraconazole, ketoconazole and voriconazole and contributes to the development of PDR1-dependent azole resistance. Plays a role in biofilm tolerance to fluconazole. Also confers resistance to 4-nitroquinoline-N-oxide (4-NQO). In Candida glabrata (strain ATCC 2001 / BCRC 20586 / JCM 3761 / NBRC 0622 / NRRL Y-65 / CBS 138) (Yeast), this protein is ABC multidrug transporter SNQ2.